A 325-amino-acid chain; its full sequence is Flotillin-like protein FloA (325 aa).

2 helical membrane-spanning segments follow: residues 4–24 and 26–46; these read LGIVFLAAVVLLFVFLFFSFI and VGLWISAWAAGVRVPLLTLVA.

The protein belongs to the flotillin-like FloA family. As to quaternary structure, homooligomerizes.

It is found in the cell membrane. Its subcellular location is the membrane raft. In terms of biological role, found in functional membrane microdomains (FMM) that may be equivalent to eukaryotic membrane rafts. FMMs are highly dynamic and increase in number as cells age. Flotillins are thought to be important factors in membrane fluidity. This chain is Flotillin-like protein FloA, found in Thermus thermophilus (strain ATCC BAA-163 / DSM 7039 / HB27).